The sequence spans 218 residues: Ribose-5-phosphate isomerase A (218 aa).

Residues 28–31 (TGST), 81–84 (DGAD), and 94–97 (KGGG) contribute to the substrate site. Residue Glu-103 is the Proton acceptor of the active site. Position 121 (Lys-121) interacts with substrate.

It belongs to the ribose 5-phosphate isomerase family. Homodimer.

It carries out the reaction aldehydo-D-ribose 5-phosphate = D-ribulose 5-phosphate. Its pathway is carbohydrate degradation; pentose phosphate pathway; D-ribose 5-phosphate from D-ribulose 5-phosphate (non-oxidative stage): step 1/1. In terms of biological role, catalyzes the reversible conversion of ribose-5-phosphate to ribulose 5-phosphate. The polypeptide is Ribose-5-phosphate isomerase A (Vibrio vulnificus (strain CMCP6)).